The sequence spans 427 residues: 3-phosphoshikimate 1-carboxyvinyltransferase (427 aa).

3-phosphoshikimate-binding residues include Lys-20, Ser-21, and Arg-25. Lys-20 contacts phosphoenolpyruvate. The phosphoenolpyruvate site is built by Gly-92 and Arg-120. The 3-phosphoshikimate site is built by Ser-166, Gln-168, Asp-312, and Lys-339. Gln-168 serves as a coordination point for phosphoenolpyruvate. Asp-312 (proton acceptor) is an active-site residue. Residues Arg-343 and Arg-385 each coordinate phosphoenolpyruvate.

The protein belongs to the EPSP synthase family. In terms of assembly, monomer.

It localises to the cytoplasm. The catalysed reaction is 3-phosphoshikimate + phosphoenolpyruvate = 5-O-(1-carboxyvinyl)-3-phosphoshikimate + phosphate. It functions in the pathway metabolic intermediate biosynthesis; chorismate biosynthesis; chorismate from D-erythrose 4-phosphate and phosphoenolpyruvate: step 6/7. In terms of biological role, catalyzes the transfer of the enolpyruvyl moiety of phosphoenolpyruvate (PEP) to the 5-hydroxyl of shikimate-3-phosphate (S3P) to produce enolpyruvyl shikimate-3-phosphate and inorganic phosphate. The polypeptide is 3-phosphoshikimate 1-carboxyvinyltransferase (Streptococcus pneumoniae (strain 70585)).